Here is a 379-residue protein sequence, read N- to C-terminus: tRNA-specific 2-thiouridylase MnmA (379 aa).

ATP-binding positions include 9–16 and Met35; that span reads GLSGGVDS. The segment at 95-97 is interaction with target base in tRNA; that stretch reads NPD. Cys100 functions as the Nucleophile in the catalytic mechanism. A disulfide bond links Cys100 and Cys198. Gly124 lines the ATP pocket. An interaction with tRNA region spans residues 148-150; it reads KDQ. Cys198 serves as the catalytic Cysteine persulfide intermediate. Residues 325 to 326 are interaction with tRNA; the sequence is RY.

It belongs to the MnmA/TRMU family.

The protein localises to the cytoplasm. It carries out the reaction S-sulfanyl-L-cysteinyl-[protein] + uridine(34) in tRNA + AH2 + ATP = 2-thiouridine(34) in tRNA + L-cysteinyl-[protein] + A + AMP + diphosphate + H(+). Its function is as follows. Catalyzes the 2-thiolation of uridine at the wobble position (U34) of tRNA, leading to the formation of s(2)U34. The chain is tRNA-specific 2-thiouridylase MnmA from Acidovorax sp. (strain JS42).